The primary structure comprises 283 residues: ATP synthase gamma chain (283 aa).

Belongs to the ATPase gamma chain family. F-type ATPases have 2 components, CF(1) - the catalytic core - and CF(0) - the membrane proton channel. CF(1) has five subunits: alpha(3), beta(3), gamma(1), delta(1), epsilon(1). CF(0) has three main subunits: a, b and c.

It is found in the cell membrane. In terms of biological role, produces ATP from ADP in the presence of a proton gradient across the membrane. The gamma chain is believed to be important in regulating ATPase activity and the flow of protons through the CF(0) complex. This is ATP synthase gamma chain from Clostridium perfringens (strain ATCC 13124 / DSM 756 / JCM 1290 / NCIMB 6125 / NCTC 8237 / Type A).